The chain runs to 609 residues: Transcription factor ntnD (609 aa).

The segment at residues 1–7 is a DNA-binding region (zn(2)-C6 fungal-type); sequence MCVGIEC. The disordered stretch occupies residues 46 to 104; it reads FRDQNESSLNRIHNRRTSNSQPSTRSINNTTTIPASNNEPLALSQPPSASSQNQVEKDQ. Over residues 51-84 the composition is skewed to polar residues; that stretch reads ESSLNRIHNRRTSNSQPSTRSINNTTTIPASNNE. The segment covering 85 to 97 has biased composition (low complexity); sequence PLALSQPPSASSQ.

It belongs to the TRI10 transcription regulator family.

The protein resides in the nucleus. Functionally, transcription factor; part of the gene cluster that mediates the biosynthesis of meroterpenoids. The chain is Transcription factor ntnD from Nectria sp.